Here is a 324-residue protein sequence, read N- to C-terminus: tRNA dimethylallyltransferase (324 aa).

17–24 is a binding site for ATP; sequence GPTASGKT. Position 19–24 (19–24) interacts with substrate; the sequence is TASGKT. 3 interaction with substrate tRNA regions span residues 42–45, 166–170, and 251–256; these read DSAL, QRIQR, and RCVGYR.

The protein belongs to the IPP transferase family. As to quaternary structure, monomer. Mg(2+) is required as a cofactor.

The catalysed reaction is adenosine(37) in tRNA + dimethylallyl diphosphate = N(6)-dimethylallyladenosine(37) in tRNA + diphosphate. Functionally, catalyzes the transfer of a dimethylallyl group onto the adenine at position 37 in tRNAs that read codons beginning with uridine, leading to the formation of N6-(dimethylallyl)adenosine (i(6)A). This chain is tRNA dimethylallyltransferase, found in Burkholderia pseudomallei (strain 668).